An 829-amino-acid chain; its full sequence is Leucine--tRNA ligase (829 aa).

A 'HIGH' region motif is present at residues 42–52 (PYPSGNLHMGH). The 'KMSKS' region motif lies at 582 to 586 (KMSKS). Lys585 contacts ATP.

It belongs to the class-I aminoacyl-tRNA synthetase family.

It is found in the cytoplasm. The catalysed reaction is tRNA(Leu) + L-leucine + ATP = L-leucyl-tRNA(Leu) + AMP + diphosphate. The sequence is that of Leucine--tRNA ligase from Moorella thermoacetica (strain ATCC 39073 / JCM 9320).